Consider the following 126-residue polypeptide: Histone H2B type 1-N (126 aa).

Residues 1 to 12 show a composition bias toward low complexity; it reads MPEPSKSAPAPK. Residues 1–36 form a disordered region; sequence MPEPSKSAPAPKKGSKKAVTKAQKKDGKKRKRSRKE. The residue at position 2 (P2) is an N-acetylproline. E3 bears the ADP-ribosyl glutamic acid mark. K6 is subject to N6-(2-hydroxyisobutyryl)lysine; alternate. K6 carries the N6-(beta-hydroxybutyryl)lysine; alternate modification. K6 carries the post-translational modification N6-acetyllysine; alternate. N6-butyryllysine; alternate is present on K6. At K6 the chain carries N6-crotonyllysine; alternate. K6 carries the N6-lactoyllysine; alternate modification. K6 participates in a covalent cross-link: Glycyl lysine isopeptide (Lys-Gly) (interchain with G-Cter in SUMO2); alternate. ADP-ribosylserine is present on S7. K12 bears the N6-(beta-hydroxybutyryl)lysine; alternate mark. 2 positions are modified to N6-acetyllysine; alternate: K12 and K13. 2 positions are modified to N6-crotonyllysine; alternate: K12 and K13. K12 is subject to N6-lactoyllysine; alternate. K13 carries the post-translational modification N6-(2-hydroxyisobutyryl)lysine; alternate. S15 is modified (phosphoserine; by STK4/MST1). Residues K16, K17, K21, and K24 each carry the N6-acetyllysine; alternate modification. 4 positions are modified to N6-crotonyllysine; alternate: K16, K17, K21, and K24. N6-lactoyllysine; alternate occurs at positions 16, 17, 21, and 24. At K17 the chain carries N6-glutaryllysine; alternate. An N6-(2-hydroxyisobutyryl)lysine; alternate mark is found at K21 and K24. At K21 the chain carries N6-(beta-hydroxybutyryl)lysine; alternate. The residue at position 21 (K21) is an N6-butyryllysine; alternate. K21 is covalently cross-linked (Glycyl lysine isopeptide (Lys-Gly) (interchain with G-Cter in SUMO2); alternate). K25 bears the N6-(2-hydroxyisobutyryl)lysine mark. The residue at position 35 (K35) is an N6-(2-hydroxyisobutyryl)lysine; alternate. K35 is modified (N6-(beta-hydroxybutyryl)lysine; alternate). N6-crotonyllysine; alternate is present on K35. K35 is subject to N6-glutaryllysine; alternate. At K35 the chain carries N6-succinyllysine; alternate. A Glycyl lysine isopeptide (Lys-Gly) (interchain with G-Cter in ubiquitin); alternate cross-link involves residue K35. E36 is subject to PolyADP-ribosyl glutamic acid. S37 carries the phosphoserine; by AMPK modification. Residues K44, K47, and K58 each carry the N6-(2-hydroxyisobutyryl)lysine; alternate modification. K44 carries the N6-lactoyllysine; alternate modification. 2 positions are modified to N6-glutaryllysine; alternate: K44 and K47. At K47 the chain carries N6-methyllysine; alternate. The residue at position 58 (K58) is an N6,N6-dimethyllysine; alternate. Residue R80 is modified to Dimethylated arginine. Residue K86 is modified to N6-(2-hydroxyisobutyryl)lysine; alternate. The residue at position 86 (K86) is an N6-acetyllysine; alternate. Position 86 is an N6-lactoyllysine; alternate (K86). K86 is subject to N6,N6,N6-trimethyllysine; alternate. R87 and R93 each carry omega-N-methylarginine. At K109 the chain carries N6-(2-hydroxyisobutyryl)lysine; alternate. At K109 the chain carries N6-lactoyllysine; alternate. The residue at position 109 (K109) is an N6-glutaryllysine; alternate. K109 bears the N6-methyllysine; alternate mark. The O-linked (GlcNAc) serine glycan is linked to S113. T116 carries the phosphothreonine modification. N6-(2-hydroxyisobutyryl)lysine; alternate is present on residues K117 and K121. At K117 the chain carries N6-(beta-hydroxybutyryl)lysine; alternate. 2 positions are modified to N6-lactoyllysine; alternate: K117 and K121. N6-glutaryllysine; alternate occurs at positions 117 and 121. K117 and K121 each carry N6-succinyllysine; alternate. At K117 the chain carries N6-methylated lysine; alternate. K121 participates in a covalent cross-link: Glycyl lysine isopeptide (Lys-Gly) (interchain with G-Cter in ubiquitin); alternate.

The protein belongs to the histone H2B family. In terms of assembly, the nucleosome is a histone octamer containing two molecules each of H2A, H2B, H3 and H4 assembled in one H3-H4 heterotetramer and two H2A-H2B heterodimers. The octamer wraps approximately 147 bp of DNA. In terms of processing, monoubiquitination at Lys-35 (H2BK34Ub) by the MSL1/MSL2 dimer is required for histone H3 'Lys-4' (H3K4me) and 'Lys-79' (H3K79me) methylation and transcription activation at specific gene loci, such as HOXA9 and MEIS1 loci. Similarly, monoubiquitination at Lys-121 (H2BK120Ub) by the RNF20/40 complex gives a specific tag for epigenetic transcriptional activation and is also prerequisite for histone H3 'Lys-4' and 'Lys-79' methylation. It also functions cooperatively with the FACT dimer to stimulate elongation by RNA polymerase II. H2BK120Ub also acts as a regulator of mRNA splicing: deubiquitination by USP49 is required for efficient cotranscriptional splicing of a large set of exons. Phosphorylated on Ser-15 (H2BS14ph) by STK4/MST1 during apoptosis; which facilitates apoptotic chromatin condensation. Also phosphorylated on Ser-15 in response to DNA double strand breaks (DSBs), and in correlation with somatic hypermutation and immunoglobulin class-switch recombination. Phosphorylation at Ser-37 (H2BS36ph) by AMPK in response to stress promotes transcription. Post-translationally, glcNAcylation at Ser-113 promotes monoubiquitination of Lys-121. It fluctuates in response to extracellular glucose, and associates with transcribed genes. In terms of processing, ADP-ribosylated by PARP1 or PARP2 on Ser-7 (H2BS6ADPr) in response to DNA damage. H2BS6ADPr promotes recruitment of CHD1L. Mono-ADP-ribosylated on Glu-3 (H2BE2ADPr) by PARP3 in response to single-strand breaks. Poly ADP-ribosylation on Glu-36 (H2BE35ADPr) by PARP1 regulates adipogenesis: it inhibits phosphorylation at Ser-37 (H2BS36ph), thereby blocking expression of pro-adipogenetic genes. Crotonylation (Kcr) is specifically present in male germ cells and marks testis-specific genes in post-meiotic cells, including X-linked genes that escape sex chromosome inactivation in haploid cells. Crotonylation marks active promoters and enhancers and confers resistance to transcriptional repressors. It is also associated with post-meiotically activated genes on autosomes. Post-translationally, lactylated in macrophages by EP300/P300 by using lactoyl-CoA directly derived from endogenous or exogenous lactate, leading to stimulates gene transcription.

The protein localises to the nucleus. Its subcellular location is the chromosome. In terms of biological role, core component of nucleosome. Nucleosomes wrap and compact DNA into chromatin, limiting DNA accessibility to the cellular machineries which require DNA as a template. Histones thereby play a central role in transcription regulation, DNA repair, DNA replication and chromosomal stability. DNA accessibility is regulated via a complex set of post-translational modifications of histones, also called histone code, and nucleosome remodeling. This is Histone H2B type 1-N (H2BC15) from Bos taurus (Bovine).